Here is a 599-residue protein sequence, read N- to C-terminus: NADH-quinone oxidoreductase subunit C/D (599 aa).

Over residues 1-15 (MTDLTAQELAQPSWQ) the composition is skewed to polar residues. Residues 1 to 21 (MTDLTAQELAQPSWQTRDHQD) are disordered. The interval 1 to 189 (MTDLTAQELA…DPFELTKQKE (189 aa)) is NADH dehydrogenase I subunit C. Residues 213-599 (DFMFLNLGPN…IDFVMSDVDR (387 aa)) are NADH dehydrogenase I subunit D.

It in the N-terminal section; belongs to the complex I 30 kDa subunit family. In the C-terminal section; belongs to the complex I 49 kDa subunit family. In terms of assembly, NDH-1 is composed of 13 different subunits. Subunits NuoB, CD, E, F, and G constitute the peripheral sector of the complex.

The protein localises to the cell inner membrane. It catalyses the reaction a quinone + NADH + 5 H(+)(in) = a quinol + NAD(+) + 4 H(+)(out). NDH-1 shuttles electrons from NADH, via FMN and iron-sulfur (Fe-S) centers, to quinones in the respiratory chain. The immediate electron acceptor for the enzyme in this species is believed to be ubiquinone. Couples the redox reaction to proton translocation (for every two electrons transferred, four hydrogen ions are translocated across the cytoplasmic membrane), and thus conserves the redox energy in a proton gradient. The sequence is that of NADH-quinone oxidoreductase subunit C/D from Erwinia tasmaniensis (strain DSM 17950 / CFBP 7177 / CIP 109463 / NCPPB 4357 / Et1/99).